The following is a 311-amino-acid chain: Putative mitochondrial transporter UCP3 (311 aa).

Topologically, residues 1–10 are mitochondrial intermembrane; that stretch reads MVGLQPSERP. The helical transmembrane segment at 11–32 threads the bilayer; it reads PTTSVKFLAAGTAACFADLLTF. Solcar repeat units follow at residues 11 to 105, 114 to 205, and 214 to 299; these read PTTS…VKQF, SSII…IKEK, and DNFP…MKRA. Residues 33 to 76 are Mitochondrial matrix-facing; that stretch reads PLDTAKVRLQIQGENQAALAARSAQYRGVLGTILTMVRTEGPRS. Residues 77–99 traverse the membrane as a helical segment; sequence LYSGLVAGLQRQMSFASIRIGLY. The Mitochondrial intermembrane segment spans residues 100–119; it reads DSVKQFYTPKGSDHSSIITR. Residues 120–136 traverse the membrane as a helical segment; it reads ILAGCTTGAMAVTCAQP. Residues 137-182 are Mitochondrial matrix-facing; that stretch reads TDVVKIRFQASMHTGLGGNRKYSGTMDAYRTIAREEGVRGLWKGIL. A helical membrane pass occupies residues 183 to 199; the sequence is PNITRNAIVNCGEMVTY. Topologically, residues 200 to 216 are mitochondrial intermembrane; that stretch reads DIIKEKLLDYHLLTDNF. Residues 217-236 form a helical membrane-spanning segment; sequence PCHFVSAFGAGFCATLVASP. Over 237-270 the chain is Mitochondrial matrix; it reads VDVVKTRYMNSPPGQYHSPFDCMLKMVTQEGPTA. Residues 271-293 form a helical membrane-spanning segment; sequence FYKGFTPSFLRLGSWNVVMFVTY. Residues 278–300 are purine nucleotide binding; that stretch reads SFLRLGSWNVVMFVTYEQMKRAL. At 294–311 the chain is on the mitochondrial intermembrane side; it reads EQMKRALMKVQMLRDSPF.

This sequence belongs to the mitochondrial carrier (TC 2.A.29) family. Interacts with HAX1; the interaction is direct and calcium-dependent.

It localises to the mitochondrion inner membrane. Its function is as follows. Putative transmembrane transporter that plays a role in mitochondrial metabolism via an as yet unclear mechanism. Originally, this mitochondrial protein was thought to act as a proton transmembrane transporter from the mitochondrial intermembrane space into the matrix, causing proton leaks through the inner mitochondrial membrane, thereby uncoupling mitochondrial membrane potential generation from ATP synthesis. However, this function is controversial and uncoupling may not be the function, or at least not the main function, but rather a consequence of more conventional metabolite transporter activity. This Bos taurus (Bovine) protein is Putative mitochondrial transporter UCP3.